Here is a 252-residue protein sequence, read N- to C-terminus: Octanoyltransferase (252 aa).

Residues 1 to 21 (MPSAPAAPAAPAAPDAAASVA) are compositionally biased toward low complexity. Residues 1–22 (MPSAPAAPAAPAAPDAAASVAP) are disordered. Residues 56–237 (PDTDDEIWVV…RLIAHLDGAT (182 aa)) enclose the BPL/LPL catalytic domain. Substrate-binding positions include 96–103 (RGGQITYH), 168–170 (ALG), and 181–183 (GLS). Cys199 functions as the Acyl-thioester intermediate in the catalytic mechanism.

It belongs to the LipB family.

The protein resides in the cytoplasm. The enzyme catalyses octanoyl-[ACP] + L-lysyl-[protein] = N(6)-octanoyl-L-lysyl-[protein] + holo-[ACP] + H(+). It functions in the pathway protein modification; protein lipoylation via endogenous pathway; protein N(6)-(lipoyl)lysine from octanoyl-[acyl-carrier-protein]: step 1/2. Functionally, catalyzes the transfer of endogenously produced octanoic acid from octanoyl-acyl-carrier-protein onto the lipoyl domains of lipoate-dependent enzymes. Lipoyl-ACP can also act as a substrate although octanoyl-ACP is likely to be the physiological substrate. This chain is Octanoyltransferase, found in Burkholderia pseudomallei (strain 668).